Here is a 101-residue protein sequence, read N- to C-terminus: DNA-binding protein HU (101 aa).

This sequence belongs to the bacterial histone-like protein family. In terms of assembly, homodimer.

Its function is as follows. Histone-like DNA-binding protein which is capable of wrapping DNA to stabilize it, and thus to prevent its denaturation under extreme environmental conditions. The chain is DNA-binding protein HU (hup) from Rickettsia bellii (strain RML369-C).